The sequence spans 340 residues: Phospho-N-acetylmuramoyl-pentapeptide-transferase (340 aa).

9 helical membrane-spanning segments follow: residues 22–42 (VVVP…LLIP), 69–89 (TMGG…WSGW), 95–115 (AVAL…WLVI), 129–149 (LLLQ…QGIP), 156–176 (GIGT…VLVG), 186–206 (GMDG…GLLH), 209–229 (PELS…LVHN), 235–257 (LFMG…LLGD), and 316–336 (VVGS…AWWH).

It belongs to the glycosyltransferase 4 family. MraY subfamily. Mg(2+) is required as a cofactor.

It is found in the cell inner membrane. It carries out the reaction UDP-N-acetyl-alpha-D-muramoyl-L-alanyl-gamma-D-glutamyl-meso-2,6-diaminopimeloyl-D-alanyl-D-alanine + di-trans,octa-cis-undecaprenyl phosphate = di-trans,octa-cis-undecaprenyl diphospho-N-acetyl-alpha-D-muramoyl-L-alanyl-D-glutamyl-meso-2,6-diaminopimeloyl-D-alanyl-D-alanine + UMP. Its pathway is cell wall biogenesis; peptidoglycan biosynthesis. In terms of biological role, catalyzes the initial step of the lipid cycle reactions in the biosynthesis of the cell wall peptidoglycan: transfers peptidoglycan precursor phospho-MurNAc-pentapeptide from UDP-MurNAc-pentapeptide onto the lipid carrier undecaprenyl phosphate, yielding undecaprenyl-pyrophosphoryl-MurNAc-pentapeptide, known as lipid I. This chain is Phospho-N-acetylmuramoyl-pentapeptide-transferase, found in Synechococcus sp. (strain JA-2-3B'a(2-13)) (Cyanobacteria bacterium Yellowstone B-Prime).